A 455-amino-acid chain; its full sequence is Growth/differentiation factor 6 (455 aa).

Residues 1-22 form the signal peptide; it reads MDTPRVLLSAVFLISFLWDLPG. Positions 23–335 are excised as a propeptide; the sequence is FQQASISSSS…LPSPGRRRRR (313 aa). Positions 29–93 are disordered; the sequence is SSSSSSAELG…EPPGRGPRVV (65 aa). Basic and acidic residues predominate over residues 45-76; the sequence is SRKEGKMQRAPRDSDAGREGQEPQPRPQDEPR. The span at 77 to 91 shows a compositional bias: low complexity; that stretch reads AQQPRAQEPPGRGPR. A glycan (N-linked (GlcNAc...) asparagine) is linked at Asn114. Disordered stretches follow at residues 244–267 and 300–351; these read EAEA…GFGR and AEAA…KKSR. Residues 330-351 are compositionally biased toward basic residues; that stretch reads GRRRRRTAFASRHGKRHGKKSR. 3 cysteine pairs are disulfide-bonded: Cys354/Cys420, Cys383/Cys452, and Cys387/Cys454.

This sequence belongs to the TGF-beta family. In terms of assembly, homodimer; disulfide-linked.

The protein resides in the secreted. Functionally, growth factor that controls proliferation and cellular differentiation in the retina and bone formation. Plays a key role in regulating apoptosis during retinal development. Establishes dorsal-ventral positional information in the retina and controls the formation of the retinotectal map. Required for normal formation of bones and joints in the limbs, skull, digits and axial skeleton. Plays a key role in establishing boundaries between skeletal elements during development. Regulation of GDF6 expression seems to be a mechanism for evolving species-specific changes in skeletal structures. Seems to positively regulate differentiation of chondrogenic tissue through the growth factor receptors subunits BMPR1A, BMPR1B, BMPR2 and ACVR2A, leading to the activation of SMAD1-SMAD5-SMAD8 complex. The regulation of chondrogenic differentiation is inhibited by NOG. Also involved in the induction of adipogenesis from mesenchymal stem cells. This mechanism acts through the growth factor receptors subunits BMPR1A, BMPR2 and ACVR2A and the activation of SMAD1-SMAD5-SMAD8 complex and MAPK14/p38. This Homo sapiens (Human) protein is Growth/differentiation factor 6 (GDF6).